Reading from the N-terminus, the 457-residue chain is Protein trichome birefringence-like 4 (457 aa).

A helical; Signal-anchor for type II membrane protein membrane pass occupies residues 19–37 (IFLTSLFFLSLFLLSSSSL). Residues 173–175 (GDS) carry the GDS motif motif. The DCXHWCLPGXXDXWN motif motif lies at 420 to 434 (DCSHWCLPGVPDSWN).

It belongs to the PC-esterase family. TBL subfamily.

The protein localises to the membrane. May act as a bridging protein that binds pectin and other cell wall polysaccharides. Probably involved in maintaining esterification of pectins. May be involved in the specific O-acetylation of cell wall polymers. This Arabidopsis thaliana (Mouse-ear cress) protein is Protein trichome birefringence-like 4 (TBL4).